Reading from the N-terminus, the 1048-residue chain is Calcium-transporting ATPase, endoplasmic reticulum-type (1048 aa).

The Cytoplasmic segment spans residues 1–63 (MEEKPFPAWS…WRLVLEQFDD (63 aa)). Residues 64–84 (TLVKILLGAAFISFVLAYVNQ) form a helical membrane-spanning segment. Over 85–93 (DETGESGFE) the chain is Lumenal. The chain crosses the membrane as a helical span at residues 94 to 114 (AYVEPLVILWILVLNAIVGVW). Topologically, residues 115-213 (QESNAEKALE…DCELQAKENM (99 aa)) are cytoplasmic. Residues 214-234 (VFAGTTVVNGSCICIVVNTGM) form a helical membrane-spanning segment. At 235 to 267 (CTEIGKIQRQIHDASMEESDTPLKKKLDEFGNR) the chain is on the lumenal side. A helical membrane pass occupies residues 268 to 288 (LTFAIGVVCLVVWAINYKYFL). Residues 289 to 312 (SWEVVDDWPSDFRFSFEKCAYYFK) lie on the Cytoplasmic side of the membrane. A helical transmembrane segment spans residues 313 to 333 (IAVALAVAAIPEGLPSVITTC). Valine 319, alanine 320, isoleucine 322, and glutamate 324 together coordinate Ca(2+). Residues 334-800 (LALGTRKMAQ…ISSNVGEVIS (467 aa)) are Lumenal-facing. The 4-aspartylphosphate intermediate role is filled by aspartate 366. Aspartate 728 and aspartate 732 together coordinate Mg(2+). The Ca(2+) site is built by asparagine 794 and glutamate 797. Residues 801–821 (IFLTAVLGIPECLIPVQLLWV) traverse the membrane as a helical segment. Asparagine 822, threonine 825, and aspartate 826 together coordinate Ca(2+). The Cytoplasmic segment spans residues 822 to 862 (NLVTDGPPATALGFNPADVDIMQKPPRKNTDALINSWVFFR). A helical transmembrane segment spans residues 863 to 883 (YMVIGSYVGIATVGIFIVWYT). Over 884–944 (QASFLGINIV…CEYFTVGKVK (61 aa)) the chain is Lumenal. A helical membrane pass occupies residues 945–965 (AMTLSLSVLVAIEMFNSLNAL). Residue glutamate 957 coordinates Ca(2+). Residues 966–981 (SEDNSLIKMPPWRNPW) lie on the Cytoplasmic side of the membrane. The chain crosses the membrane as a helical span at residues 982–1002 (LLVAMSLSFALHSVILYVPFL). The Lumenal portion of the chain corresponds to 1003–1007 (ADIFG). Residues 1008–1028 (IVPLSLYEWLLVILLSAPVIL) form a helical membrane-spanning segment. Over 1029–1048 (IDEVLKFVGRRRRRTKLKAA) the chain is Cytoplasmic.

It belongs to the cation transport ATPase (P-type) (TC 3.A.3) family. Type IIA subfamily. In terms of tissue distribution, 9-fold higher level in roots compared with leaves.

Its subcellular location is the endoplasmic reticulum membrane. The enzyme catalyses Ca(2+)(in) + ATP + H2O = Ca(2+)(out) + ADP + phosphate + H(+). This magnesium-dependent enzyme catalyzes the hydrolysis of ATP coupled with the translocation of calcium from the cytosol to an endomembrane compartment. This chain is Calcium-transporting ATPase, endoplasmic reticulum-type, found in Solanum lycopersicum (Tomato).